Reading from the N-terminus, the 45-residue chain is Photosystem II reaction center protein K (45 aa).

Positions 1 to 8 (MITAIIIA) are excised as a propeptide. Residues 23 to 43 (ILPVIPIFFLLLAFVWQAAIG) traverse the membrane as a helical segment.

The protein belongs to the PsbK family. In terms of assembly, PSII is composed of 1 copy each of membrane proteins PsbA, PsbB, PsbC, PsbD, PsbE, PsbF, PsbH, PsbI, PsbJ, PsbK, PsbL, PsbM, PsbT, PsbX, PsbY, PsbZ, Psb30/Ycf12, at least 3 peripheral proteins of the oxygen-evolving complex and a large number of cofactors. It forms dimeric complexes.

It localises to the plastid. It is found in the chloroplast thylakoid membrane. One of the components of the core complex of photosystem II (PSII). PSII is a light-driven water:plastoquinone oxidoreductase that uses light energy to abstract electrons from H(2)O, generating O(2) and a proton gradient subsequently used for ATP formation. It consists of a core antenna complex that captures photons, and an electron transfer chain that converts photonic excitation into a charge separation. This is Photosystem II reaction center protein K from Gracilaria tenuistipitata var. liui (Red alga).